Consider the following 387-residue polypeptide: Phosphoglycerate kinase (387 aa).

Substrate-binding positions include 21-23 (DLN), R36, 59-62 (HLGR), R113, and R146. ATP-binding positions include K197, E314, and 340 to 343 (GGDT).

The protein belongs to the phosphoglycerate kinase family. As to quaternary structure, monomer.

The protein localises to the cytoplasm. It carries out the reaction (2R)-3-phosphoglycerate + ATP = (2R)-3-phospho-glyceroyl phosphate + ADP. It participates in carbohydrate degradation; glycolysis; pyruvate from D-glyceraldehyde 3-phosphate: step 2/5. This Pseudomonas fluorescens (strain Pf0-1) protein is Phosphoglycerate kinase.